The sequence spans 159 residues: Eukaryotic translation initiation factor 5A-1 (159 aa).

A compositionally biased stretch (basic and acidic residues) spans 1 to 12 (MSDEEHHFESKA). A disordered region spans residues 1 to 23 (MSDEEHHFESKADAGASKTYPQQ). Residue Lys52 is modified to Hypusine.

The protein belongs to the eIF-5A family. In terms of processing, lys-52 undergoes hypusination, a unique post-translational modification that consists in the addition of a butylamino group from spermidine to lysine side chain, leading to the formation of the unusual amino acid hypusine. eIF-5As are the only known proteins to undergo this modification, which is essential for their function.

Its function is as follows. Translation factor that promotes translation elongation and termination, particularly upon ribosome stalling at specific amino acid sequence contexts. Binds between the exit (E) and peptidyl (P) site of the ribosome and promotes rescue of stalled ribosome: specifically required for efficient translation of polyproline-containing peptides as well as other motifs that stall the ribosome. Acts as a ribosome quality control (RQC) cofactor by joining the RQC complex to facilitate peptidyl transfer during CAT tailing step. The sequence is that of Eukaryotic translation initiation factor 5A-1 (EIF-5A1) from Nicotiana plumbaginifolia (Leadwort-leaved tobacco).